A 138-amino-acid polypeptide reads, in one-letter code: Small ribosomal subunit protein uS11c (138 aa).

A disordered region spans residues 1–25; it reads MAKSIPRTGSRRNVRSGSRKSTRRI. The segment covering 9–25 has biased composition (basic residues); it reads GSRRNVRSGSRKSTRRI.

Belongs to the universal ribosomal protein uS11 family. As to quaternary structure, part of the 30S ribosomal subunit.

It is found in the plastid. The protein localises to the chloroplast. This is Small ribosomal subunit protein uS11c from Eucalyptus globulus subsp. globulus (Tasmanian blue gum).